Here is a 337-residue protein sequence, read N- to C-terminus: HTH-type transcriptional regulator MalR (337 aa).

An HTH lacI-type domain is found at 1–56 (MVTIKDIAQAANVSTSTVSRVISGNPRISMQTREKVKATMKSFNYQPNRAARTLAT). Positions 4–23 (IKDIAQAANVSTSTVSRVIS) form a DNA-binding region, H-T-H motif.

In terms of biological role, transcriptional repressor of the malA gene for maltase. The sequence is that of HTH-type transcriptional regulator MalR (malR) from Staphylococcus xylosus.